Here is a 221-residue protein sequence, read N- to C-terminus: Chalcone--flavanone isomerase 2 (221 aa).

Substrate is bound by residues Thr50, Asn115, and Ser192.

Belongs to the chalcone isomerase family.

It catalyses the reaction a chalcone = a flavanone.. It participates in secondary metabolite biosynthesis; flavonoid biosynthesis. Catalyzes the intramolecular cyclization of bicyclic chalcones into tricyclic (S)-flavanones. Responsible for the isomerization of 4,2',4',6'-tetrahydroxychalcone (also termed chalcone) into naringenin. The polypeptide is Chalcone--flavanone isomerase 2 (CHI2) (Lotus japonicus (Lotus corniculatus var. japonicus)).